Reading from the N-terminus, the 378-residue chain is Mating-type protein MAT-1 (378 aa).

The segment at residues 60 to 117 (KARKALNAFVGFRCYYITIPMFKPWPMKKLSNLIGLLWEADPNKSLWSLMAKPWSTIR) is a DNA-binding region (alpha box).

Belongs to the MATALPHA1 family.

The protein localises to the nucleus. Its function is as follows. Mating type proteins are sequence specific DNA-binding proteins that act as master switches in fungal differentiation by controlling gene expression in a cell type-specific fashion. Transcriptional activator that induces the transcription of alpha-specific genes. This Cochliobolus sativus (Common root rot and spot blotch fungus) protein is Mating-type protein MAT-1 (MAT1).